Reading from the N-terminus, the 237-residue chain is NAD-dependent protein deacetylase (237 aa).

Residues 1 to 237 (MLTTWLTEAK…LEETNRALQA (237 aa)) form the Deacetylase sirtuin-type domain. NAD(+) is bound by residues alanine 18, threonine 22, phenylalanine 29, arginine 30, glutamine 95, aspartate 98, and histidine 113. Phenylalanine 29 provides a ligand contact to nicotinamide. Residue aspartate 98 coordinates nicotinamide. The active-site Proton acceptor is histidine 113. Residues cysteine 121, cysteine 124, cysteine 140, and cysteine 142 each contribute to the Zn(2+) site. Residues serine 180, serine 181, asparagine 205, and isoleucine 224 each coordinate NAD(+).

It belongs to the sirtuin family. Class U subfamily. The cofactor is Zn(2+).

Its subcellular location is the cytoplasm. The enzyme catalyses N(6)-acetyl-L-lysyl-[protein] + NAD(+) + H2O = 2''-O-acetyl-ADP-D-ribose + nicotinamide + L-lysyl-[protein]. In terms of biological role, NAD-dependent protein deacetylase which modulates the activities of several enzymes which are inactive in their acetylated form. The protein is NAD-dependent protein deacetylase of Halalkalibacterium halodurans (strain ATCC BAA-125 / DSM 18197 / FERM 7344 / JCM 9153 / C-125) (Bacillus halodurans).